The chain runs to 199 residues: Recombination protein RecR (199 aa).

The C4-type zinc finger occupies 56–71 (CRSCFNVAQSELCRIC). Positions 79-174 (SSICVVEEPK…KVTRLASGLP (96 aa)) constitute a Toprim domain.

Belongs to the RecR family.

May play a role in DNA repair. It seems to be involved in an RecBC-independent recombinational process of DNA repair. It may act with RecF and RecO. In Frankia casuarinae (strain DSM 45818 / CECT 9043 / HFP020203 / CcI3), this protein is Recombination protein RecR.